The following is a 532-amino-acid chain: Phosphoenolpyruvate carboxykinase (ATP) (532 aa).

The substrate site is built by Arg-60, Tyr-194, and Lys-200. ATP is bound by residues Lys-200, His-219, and 237–245 (GLSGTGKTT). Residues Lys-200 and His-219 each contribute to the Mn(2+) site. Asp-258 contributes to the Mn(2+) binding site. ATP is bound by residues Glu-286, Arg-324, and Thr-449. Arg-324 serves as a coordination point for substrate.

This sequence belongs to the phosphoenolpyruvate carboxykinase (ATP) family. Mn(2+) serves as cofactor.

It is found in the cytoplasm. The catalysed reaction is oxaloacetate + ATP = phosphoenolpyruvate + ADP + CO2. It participates in carbohydrate biosynthesis; gluconeogenesis. Functionally, involved in the gluconeogenesis. Catalyzes the conversion of oxaloacetate (OAA) to phosphoenolpyruvate (PEP) through direct phosphoryl transfer between the nucleoside triphosphate and OAA. This chain is Phosphoenolpyruvate carboxykinase (ATP), found in Ruegeria pomeroyi (strain ATCC 700808 / DSM 15171 / DSS-3) (Silicibacter pomeroyi).